Reading from the N-terminus, the 552-residue chain is CTP synthase (552 aa).

Positions methionine 1–leucine 270 are amidoligase domain. Serine 13 contacts CTP. Residue serine 13 coordinates UTP. ATP is bound by residues serine 14–isoleucine 19 and aspartate 71. Positions 71 and 144 each coordinate Mg(2+). CTP-binding positions include aspartate 151 to glutamate 153, lysine 191 to glutamine 196, and lysine 227. Residues lysine 191–glutamine 196 and lysine 227 contribute to the UTP site. Residues glutamine 295–proline 548 form the Glutamine amidotransferase type-1 domain. Glycine 357 is a binding site for L-glutamine. Residue cysteine 384 is the Nucleophile; for glutamine hydrolysis of the active site. L-glutamine contacts are provided by residues leucine 385–glutamine 388, glutamate 408, and arginine 474. Catalysis depends on residues histidine 521 and glutamate 523.

It belongs to the CTP synthase family. Homotetramer.

It catalyses the reaction UTP + L-glutamine + ATP + H2O = CTP + L-glutamate + ADP + phosphate + 2 H(+). The enzyme catalyses L-glutamine + H2O = L-glutamate + NH4(+). The catalysed reaction is UTP + NH4(+) + ATP = CTP + ADP + phosphate + 2 H(+). Its pathway is pyrimidine metabolism; CTP biosynthesis via de novo pathway; CTP from UDP: step 2/2. With respect to regulation, allosterically activated by GTP, when glutamine is the substrate; GTP has no effect on the reaction when ammonia is the substrate. The allosteric effector GTP functions by stabilizing the protein conformation that binds the tetrahedral intermediate(s) formed during glutamine hydrolysis. Inhibited by the product CTP, via allosteric rather than competitive inhibition. Catalyzes the ATP-dependent amination of UTP to CTP with either L-glutamine or ammonia as the source of nitrogen. Regulates intracellular CTP levels through interactions with the four ribonucleotide triphosphates. This chain is CTP synthase, found in Acidovorax ebreus (strain TPSY) (Diaphorobacter sp. (strain TPSY)).